We begin with the raw amino-acid sequence, 354 residues long: Protein-arginine kinase (354 aa).

A Phosphagen kinase C-terminal domain is found at 24 to 254 (IVLSSRIRLA…QQIIQQEKMA (231 aa)). ATP-binding positions include 27 to 31 (SSRIR), His-92, Arg-125, 176 to 180 (RASVM), and 207 to 212 (RGIYGE). The short motif at 337-342 (RDYRRA) is the RDXXRA motif of the pArg binding pocket involved in allosteric regulation element.

The protein belongs to the ATP:guanido phosphotransferase family.

The enzyme catalyses L-arginyl-[protein] + ATP = N(omega)-phospho-L-arginyl-[protein] + ADP + H(+). Appears to be allosterically activated by the binding of pArg-containing polypeptides to the pArg-binding pocket localized in the C-terminal domain of McsB. Functionally, catalyzes the specific phosphorylation of arginine residues in a large number of proteins. Is part of the bacterial stress response system. Protein arginine phosphorylation has a physiologically important role and is involved in the regulation of many critical cellular processes, such as protein homeostasis, motility, competence, and stringent and stress responses, by regulating gene expression and protein activity. The chain is Protein-arginine kinase from Bacillus anthracis (strain A0248).